Reading from the N-terminus, the 150-residue chain is Anti-sigma F factor (150 aa).

The protein belongs to the anti-sigma-factor family.

It carries out the reaction L-seryl-[protein] + ATP = O-phospho-L-seryl-[protein] + ADP + H(+). It catalyses the reaction L-threonyl-[protein] + ATP = O-phospho-L-threonyl-[protein] + ADP + H(+). Binds to sigma F and blocks its ability to form an RNA polymerase holoenzyme (E-sigma F). Phosphorylates SpoIIAA on a serine residue. This phosphorylation may enable SpoIIAA to act as an anti-anti-sigma factor that counteracts SpoIIAB and thus releases sigma F from inhibition. This chain is Anti-sigma F factor, found in Pasteuria penetrans.